We begin with the raw amino-acid sequence, 154 residues long: 6,7-dimethyl-8-ribityllumazine synthase (154 aa).

Residues phenylalanine 23, 57-59 (AFE), and 81-83 (AVI) contribute to the 5-amino-6-(D-ribitylamino)uracil site. 86–87 (ST) is a (2S)-2-hydroxy-3-oxobutyl phosphate binding site. Histidine 89 (proton donor) is an active-site residue. Phenylalanine 114 lines the 5-amino-6-(D-ribitylamino)uracil pocket. Residue arginine 128 participates in (2S)-2-hydroxy-3-oxobutyl phosphate binding.

It belongs to the DMRL synthase family.

The catalysed reaction is (2S)-2-hydroxy-3-oxobutyl phosphate + 5-amino-6-(D-ribitylamino)uracil = 6,7-dimethyl-8-(1-D-ribityl)lumazine + phosphate + 2 H2O + H(+). The protein operates within cofactor biosynthesis; riboflavin biosynthesis; riboflavin from 2-hydroxy-3-oxobutyl phosphate and 5-amino-6-(D-ribitylamino)uracil: step 1/2. Its function is as follows. Catalyzes the formation of 6,7-dimethyl-8-ribityllumazine by condensation of 5-amino-6-(D-ribitylamino)uracil with 3,4-dihydroxy-2-butanone 4-phosphate. This is the penultimate step in the biosynthesis of riboflavin. This is 6,7-dimethyl-8-ribityllumazine synthase from Syntrophotalea carbinolica (strain DSM 2380 / NBRC 103641 / GraBd1) (Pelobacter carbinolicus).